Consider the following 210-residue polypeptide: Large ribosomal subunit protein uL3 (210 aa).

This sequence belongs to the universal ribosomal protein uL3 family. Part of the 50S ribosomal subunit. Forms a cluster with proteins L14 and L19.

In terms of biological role, one of the primary rRNA binding proteins, it binds directly near the 3'-end of the 23S rRNA, where it nucleates assembly of the 50S subunit. The polypeptide is Large ribosomal subunit protein uL3 (Pediococcus pentosaceus (strain ATCC 25745 / CCUG 21536 / LMG 10740 / 183-1w)).